Consider the following 605-residue polypeptide: Putative glutaminase 2 (605 aa).

Substrate-binding residues include Ser213, Asn262, Glu308, Asn315, Tyr342, Tyr394, and Val412. ANK repeat units lie at residues 480–509 and 513–543; these read DRLIPVFHVARAGDLPTMRRLYMQGEDLNT and DDRTVLHIAATEGYETMIKFLVNVAKVDVDK. The segment covering 569 to 581 has biased composition (basic and acidic residues); sequence KAMKRPEQHRKDS. The interval 569 to 605 is disordered; that stretch reads KAMKRPEQHRKDSVSSLDTDDEIDDDGFPEKPSFTID. The span at 586-595 shows a compositional bias: acidic residues; that stretch reads DTDDEIDDDG.

The protein belongs to the glutaminase family.

It carries out the reaction L-glutamine + H2O = L-glutamate + NH4(+). The chain is Putative glutaminase 2 (glna-2) from Caenorhabditis elegans.